We begin with the raw amino-acid sequence, 138 residues long: ATP synthase epsilon chain (138 aa).

The protein belongs to the ATPase epsilon chain family. F-type ATPases have 2 components, CF(1) - the catalytic core - and CF(0) - the membrane proton channel. CF(1) has five subunits: alpha(3), beta(3), gamma(1), delta(1), epsilon(1). CF(0) has three main subunits: a, b and c.

Its subcellular location is the cell inner membrane. In terms of biological role, produces ATP from ADP in the presence of a proton gradient across the membrane. The protein is ATP synthase epsilon chain of Cupriavidus necator (strain ATCC 17699 / DSM 428 / KCTC 22496 / NCIMB 10442 / H16 / Stanier 337) (Ralstonia eutropha).